Consider the following 768-residue polypeptide: Multidomain esterase (768 aa).

The N-terminal stretch at 1-40 (MKKHFVVGETIKRFLRIGTSLALSISTLSLLPSAPRLSSA) is a signal peptide. Positions 41–264 (AGTIKIMPLG…YWLEQIEGYL (224 aa)) are acetylxylan esterase. S68 functions as the Nucleophile; for acetylxylan esterase activity in the catalytic mechanism. Catalysis depends on for acetylxylan esterase activity residues D240 and H243. Over residues 267-283 (SDGPQQTQPTQPSQGDS) the composition is skewed to low complexity. Positions 267–289 (SDGPQQTQPTQPSQGDSGPELIY) are disordered. Residues 285-352 (PELIYGDLDG…IIGKIKEFTV (68 aa)) form the Dockerin domain. The tract at residues 353 to 768 (AEKTVTEKPV…ADTFASKWLY (416 aa)) is glucuronoyl esterase. Residues 563–568 (GVSRYG) carry the GXSYXG catalytic site motif motif. S565 acts as the Nucleophile; for glucuronoyl esterase activity in catalysis. Residues K569, E633, and W679 each contribute to the substrate site.

In the N-terminal section; belongs to the carbohydrate esterase 3 (CE3) family. The protein in the C-terminal section; belongs to the carbohydrate esterase 15 (CE15) family.

The protein resides in the secreted. The enzyme catalyses Deacetylation of xylans and xylo-oligosaccharides.. It catalyses the reaction a 4-O-methyl-alpha-D-glucuronosyl ester derivative + H2O = 4-O-methyl-alpha-D-glucuronate derivative + an alcohol + H(+). It functions in the pathway glycan degradation; xylan degradation. Functionally, esterase involved in the degradation of plant cell wall polysaccharides. Catalyzes the deacetylation of chemically acetylated xylan and native, steam-extracted xylan. Seems to act in synergy with the xylanase XynD which produces xylo-oligosaccharides. Also catalyzes the deesterification of methyl esters of 4-O-methyl-D-glucuronic acid (MeGlcA) side residues in synthetic glucuronoxylan methyl ester, suggesting that it may be able to cleave ester linkages between MeGlcA carboxyl and more complex alcohols, including linkages between hemicellulose and lignin alcohols in plant cell walls. This is Multidomain esterase from Ruminococcus flavefaciens.